A 68-amino-acid chain; its full sequence is MAILRSKEIWDMEVDEIQDKLVELRAELSKNVSKSAAAGVIENPGKIRELKRTIARVLTILNEKQKEN.

The protein belongs to the universal ribosomal protein uL29 family.

The chain is Large ribosomal subunit protein uL29 from Methanobrevibacter smithii (strain ATCC 35061 / DSM 861 / OCM 144 / PS).